The chain runs to 1529 residues: Protein STU1 (1529 aa).

Disordered regions lie at residues 266-314 (SMGR…DEQI), 617-638 (KPRT…ARKA), 651-745 (KELR…SQGI), and 1070-1090 (SAND…TSPI). A compositionally biased stretch (low complexity) spans 273–290 (TISSNSSTPASLSSSTMS). 2 stretches are compositionally biased toward polar residues: residues 295-308 (RTNF…ISPS) and 619-634 (RTIT…SSLT). Residues 660 to 674 (TSISRPSSRINSTSS) show a composition bias toward low complexity. A compositionally biased stretch (polar residues) spans 708 to 723 (TPSTSSLSRVESNQDA).

The protein belongs to the CLASP family. Interacts with microtubules.

The protein localises to the cytoplasm. The protein resides in the cytoskeleton. Its subcellular location is the nucleus. It is found in the spindle. Its function is as follows. Microtubule binding protein that promotes the stabilization of dynamic microtubules. Required for mitotic spindle formation. The polypeptide is Protein STU1 (STU1) (Debaryomyces hansenii (strain ATCC 36239 / CBS 767 / BCRC 21394 / JCM 1990 / NBRC 0083 / IGC 2968) (Yeast)).